The sequence spans 182 residues: MRVLGIDPGLRRTGFGVIDAEGMRLRYVASGTIVVPPALALPERLKVILDNLRQVARDTRPDVAALEIVFLNTNPASTLLLGQARGAALCALADSQLAVHEYTALQIKKAVVGTGRAAKEQVQMMVQRLLSLDGTPAPDSADALACAICHAHVGPLQARLGGLSAATGLGGGTRVRGGRLVG.

Active-site residues include D7, E67, and D139. The Mg(2+) site is built by D7, E67, and D139.

This sequence belongs to the RuvC family. As to quaternary structure, homodimer which binds Holliday junction (HJ) DNA. The HJ becomes 2-fold symmetrical on binding to RuvC with unstacked arms; it has a different conformation from HJ DNA in complex with RuvA. In the full resolvosome a probable DNA-RuvA(4)-RuvB(12)-RuvC(2) complex forms which resolves the HJ. The cofactor is Mg(2+).

It localises to the cytoplasm. It carries out the reaction Endonucleolytic cleavage at a junction such as a reciprocal single-stranded crossover between two homologous DNA duplexes (Holliday junction).. In terms of biological role, the RuvA-RuvB-RuvC complex processes Holliday junction (HJ) DNA during genetic recombination and DNA repair. Endonuclease that resolves HJ intermediates. Cleaves cruciform DNA by making single-stranded nicks across the HJ at symmetrical positions within the homologous arms, yielding a 5'-phosphate and a 3'-hydroxyl group; requires a central core of homology in the junction. The consensus cleavage sequence is 5'-(A/T)TT(C/G)-3'. Cleavage occurs on the 3'-side of the TT dinucleotide at the point of strand exchange. HJ branch migration catalyzed by RuvA-RuvB allows RuvC to scan DNA until it finds its consensus sequence, where it cleaves and resolves the cruciform DNA. This chain is Crossover junction endodeoxyribonuclease RuvC, found in Bordetella petrii (strain ATCC BAA-461 / DSM 12804 / CCUG 43448).